Consider the following 295-residue polypeptide: Pyridoxal 5'-phosphate synthase subunit PdxS (295 aa).

D25 is a D-ribose 5-phosphate binding site. K82 serves as the catalytic Schiff-base intermediate with D-ribose 5-phosphate. G154 contributes to the D-ribose 5-phosphate binding site. R166 is a binding site for D-glyceraldehyde 3-phosphate. Residues G215 and 236-237 contribute to the D-ribose 5-phosphate site; that span reads GS.

Belongs to the PdxS/SNZ family. In terms of assembly, in the presence of PdxT, forms a dodecamer of heterodimers.

The enzyme catalyses aldehydo-D-ribose 5-phosphate + D-glyceraldehyde 3-phosphate + L-glutamine = pyridoxal 5'-phosphate + L-glutamate + phosphate + 3 H2O + H(+). It functions in the pathway cofactor biosynthesis; pyridoxal 5'-phosphate biosynthesis. Catalyzes the formation of pyridoxal 5'-phosphate from ribose 5-phosphate (RBP), glyceraldehyde 3-phosphate (G3P) and ammonia. The ammonia is provided by the PdxT subunit. Can also use ribulose 5-phosphate and dihydroxyacetone phosphate as substrates, resulting from enzyme-catalyzed isomerization of RBP and G3P, respectively. The polypeptide is Pyridoxal 5'-phosphate synthase subunit PdxS (Dictyoglomus turgidum (strain DSM 6724 / Z-1310)).